The following is a 432-amino-acid chain: Luc7-like protein 3 (432 aa).

Residue Met-1 is modified to N-acetylmethionine. A phosphoserine mark is found at Ser-3, Ser-110, and Ser-115. Residues 124–181 (KNEEKIQVLTDKIDVLLQQIEELGSEGKVEEAQGMMKLVEQLKEERELLRSTTSTIES) adopt a coiled-coil conformation. Lys-231 bears the N6-acetyllysine mark. Positions 234–287 (LRKRTEEPDRDERLKKEKQEREEREKEREREREERERKRRREEEEREKERARDR) are enriched in basic and acidic residues. The interval 234-432 (LRKRTEEPDR…IKSEGDTQSN (199 aa)) is disordered. Basic residues predominate over residues 288–301 (ERRKRSRSRSRHSS). Basic and acidic residues predominate over residues 302–311 (RTSDRRCSRS). Positions 312–367 (RDHKRSRSRERRRSRSRDRRRSRSHDRSERKHRSRSRDRRRSKSRDRKSYKHRSKS) are enriched in basic residues. Over residues 368 to 414 (RDREQDRKSKEKEKRGSDDKKSSVKSGSREKQSEDTNTESKESDTKN) the composition is skewed to basic and acidic residues. Ser-420 is modified (phosphoserine). The span at 421-432 (EDIKSEGDTQSN) shows a compositional bias: basic and acidic residues. Lys-424 participates in a covalent cross-link: Glycyl lysine isopeptide (Lys-Gly) (interchain with G-Cter in SUMO1); alternate. Lys-424 participates in a covalent cross-link: Glycyl lysine isopeptide (Lys-Gly) (interchain with G-Cter in SUMO2); alternate. Ser-425 and Ser-431 each carry phosphoserine.

It belongs to the Luc7 family. May interact with SFRS1 and form homodimers. Interacts with JMJD6. Interacts with RBM25. Interacts with RSRC1 (via Arg/Ser-rich domain). Interacts with RRP1B. Post-translationally, phosphorylated in vitro by SRPK1, SRPK2 and CLK1. As to expression, widely expressed. Highest levels in heart, brain, pancreas, thymus, ovary, small intestine and peripheral blood leukocytes, as well as cerebellum, putamen and pituitary gland. Lowest levels in lung, liver and kidney. Also expressed in fetal tissues, including brain, heart, kidney, thymus and lung.

The protein localises to the nucleus speckle. Functionally, binds cAMP regulatory element DNA sequence. May play a role in RNA splicing. The protein is Luc7-like protein 3 (LUC7L3) of Homo sapiens (Human).